A 99-amino-acid chain; its full sequence is Large ribosomal subunit protein bL27 (99 aa).

Positions 1 to 12 (MMINNLEALKLF) are excised as a propeptide. The disordered stretch occupies residues 15 to 36 (HKGGGSTANGRNSAGRRLGAKR).

This sequence belongs to the bacterial ribosomal protein bL27 family. In terms of processing, the N-terminus is cleaved by ribosomal processing cysteine protease Prp.

The sequence is that of Large ribosomal subunit protein bL27 from Lactobacillus johnsonii (strain CNCM I-12250 / La1 / NCC 533).